A 375-amino-acid polypeptide reads, in one-letter code: Growth/differentiation factor 8 (375 aa).

A signal peptide spans 1–18 (MQKLQIFVYIYLFMLTVA). Positions 19-266 (GPVDLNENSE…VTDTPKRARR (248 aa)) are excised as a propeptide. N-linked (GlcNAc...) asparagine glycosylation is found at N48 and N71. 4 disulfide bridges follow: C272–C282, C281–C340, C309–C372, and C313–C374.

It belongs to the TGF-beta family. As to quaternary structure, homodimer; disulfide-linked. Interacts with WFIKKN2, leading to inhibit its activity. Interacts with FSTL3. Post-translationally, synthesized as large precursor molecule that undergoes proteolytic cleavage to generate an N-terminal propeptide and a disulfide linked C-terminal dimer, which is the biologically active molecule. The circulating form consists of a latent complex of the C-terminal dimer and other proteins, including its propeptide, which maintain the C-terminal dimer in a latent, inactive state. Ligand activation requires additional cleavage of the prodomain by a tolloid-like metalloproteinase.

The protein localises to the secreted. In terms of biological role, acts specifically as a negative regulator of skeletal muscle growth. This chain is Growth/differentiation factor 8 (MSTN), found in Sylvicapra grimmia (Grey duiker).